The chain runs to 156 residues: ATP synthase subunit b (156 aa).

The helical transmembrane segment at 12–32 threads the bilayer; it reads VAFLIFVLFCMKFVWPPVIAA.

This sequence belongs to the ATPase B chain family. In terms of assembly, F-type ATPases have 2 components, F(1) - the catalytic core - and F(0) - the membrane proton channel. F(1) has five subunits: alpha(3), beta(3), gamma(1), delta(1), epsilon(1). F(0) has three main subunits: a(1), b(2) and c(10-14). The alpha and beta chains form an alternating ring which encloses part of the gamma chain. F(1) is attached to F(0) by a central stalk formed by the gamma and epsilon chains, while a peripheral stalk is formed by the delta and b chains.

The protein localises to the cell inner membrane. Functionally, f(1)F(0) ATP synthase produces ATP from ADP in the presence of a proton or sodium gradient. F-type ATPases consist of two structural domains, F(1) containing the extramembraneous catalytic core and F(0) containing the membrane proton channel, linked together by a central stalk and a peripheral stalk. During catalysis, ATP synthesis in the catalytic domain of F(1) is coupled via a rotary mechanism of the central stalk subunits to proton translocation. Component of the F(0) channel, it forms part of the peripheral stalk, linking F(1) to F(0). This is ATP synthase subunit b from Pseudomonas fluorescens (strain Pf0-1).